The following is a 75-amino-acid chain: Small ribosomal subunit protein bS18 (75 aa).

It belongs to the bacterial ribosomal protein bS18 family. In terms of assembly, part of the 30S ribosomal subunit. Forms a tight heterodimer with protein bS6.

Binds as a heterodimer with protein bS6 to the central domain of the 16S rRNA, where it helps stabilize the platform of the 30S subunit. This Yersinia enterocolitica serotype O:8 / biotype 1B (strain NCTC 13174 / 8081) protein is Small ribosomal subunit protein bS18.